Here is a 365-residue protein sequence, read N- to C-terminus: Phospho-N-acetylmuramoyl-pentapeptide-transferase (365 aa).

Helical transmembrane passes span 22–42, 74–94, 95–115, 134–154, 168–188, 201–221, 240–260, 267–287, 292–312, and 342–362; these read YISV…LALG, TMGG…WGDL, TSIY…IGFF, KFAL…YLLS, SLYI…IING, GLAI…AYIE, LAEV…FLWF, VFMG…IAVM, LIFF…MLQV, and KVVI…LAAI.

This sequence belongs to the glycosyltransferase 4 family. MraY subfamily. Mg(2+) is required as a cofactor.

The protein resides in the cell inner membrane. It catalyses the reaction UDP-N-acetyl-alpha-D-muramoyl-L-alanyl-gamma-D-glutamyl-meso-2,6-diaminopimeloyl-D-alanyl-D-alanine + di-trans,octa-cis-undecaprenyl phosphate = di-trans,octa-cis-undecaprenyl diphospho-N-acetyl-alpha-D-muramoyl-L-alanyl-D-glutamyl-meso-2,6-diaminopimeloyl-D-alanyl-D-alanine + UMP. Its pathway is cell wall biogenesis; peptidoglycan biosynthesis. Functionally, catalyzes the initial step of the lipid cycle reactions in the biosynthesis of the cell wall peptidoglycan: transfers peptidoglycan precursor phospho-MurNAc-pentapeptide from UDP-MurNAc-pentapeptide onto the lipid carrier undecaprenyl phosphate, yielding undecaprenyl-pyrophosphoryl-MurNAc-pentapeptide, known as lipid I. The polypeptide is Phospho-N-acetylmuramoyl-pentapeptide-transferase (Francisella tularensis subsp. novicida (strain U112)).